We begin with the raw amino-acid sequence, 168 residues long: Protein-export protein SecB (168 aa).

Belongs to the SecB family. As to quaternary structure, homotetramer, a dimer of dimers. One homotetramer interacts with 1 SecA dimer.

The protein localises to the cytoplasm. One of the proteins required for the normal export of preproteins out of the cell cytoplasm. It is a molecular chaperone that binds to a subset of precursor proteins, maintaining them in a translocation-competent state. It also specifically binds to its receptor SecA. In Thioalkalivibrio sulfidiphilus (strain HL-EbGR7), this protein is Protein-export protein SecB.